The following is a 136-amino-acid chain: Protein NrdI (136 aa).

Belongs to the NrdI family.

Functionally, probably involved in ribonucleotide reductase function. The polypeptide is Protein NrdI (Citrobacter koseri (strain ATCC BAA-895 / CDC 4225-83 / SGSC4696)).